The chain runs to 160 residues: Lymphocyte antigen 96 (160 aa).

Residues 1-16 (MLPFILFSTLLPLIFT) form the signal peptide. 3 cysteine pairs are disulfide-bonded: cysteine 25–cysteine 51, cysteine 37–cysteine 148, and cysteine 95–cysteine 105. N-linked (GlcNAc...) asparagine glycosylation is found at asparagine 26, asparagine 77, and asparagine 101. Residues 119 to 123 (FSFKG) form an interaction with lipopolysaccharide region. N-linked (GlcNAc...) asparagine glycosylation occurs at asparagine 150.

In terms of assembly, heterogeneous homomer formed from homodimers; disulfide-linked. Belongs to the lipopolysaccharide (LPS) receptor, a multi-protein complex containing at least CD14, LY96 and TLR4. Binds to the extracellular domains of TLR2 and TLR4. Ligand binding induces interaction with TLR4 and oligomerization of the complex. N-glycosylated.

The protein resides in the secreted. It localises to the extracellular space. Functionally, binds bacterial lipopolysaccharide (LPS). Cooperates with TLR4 in the innate immune response to bacterial lipopolysaccharide (LPS), and with TLR2 in the response to cell wall components from Gram-positive and Gram-negative bacteria. Enhances TLR4-dependent activation of NF-kappa-B. Cells expressing both LY96 and TLR4, but not TLR4 alone, respond to LPS. This chain is Lymphocyte antigen 96 (LY96), found in Cricetulus griseus (Chinese hamster).